We begin with the raw amino-acid sequence, 350 residues long: Erythronate-4-phosphate dehydrogenase (350 aa).

Positions 45 and 66 each coordinate substrate. Residues 124-125 (QV), D144, 203-205 (ASR), and D226 contribute to the NAD(+) site. R205 is an active-site residue. E231 is an active-site residue. H248 (proton donor) is an active-site residue. An NAD(+)-binding site is contributed by G251.

This sequence belongs to the D-isomer specific 2-hydroxyacid dehydrogenase family. PdxB subfamily. As to quaternary structure, homodimer.

It is found in the cytoplasm. The enzyme catalyses 4-phospho-D-erythronate + NAD(+) = (R)-3-hydroxy-2-oxo-4-phosphooxybutanoate + NADH + H(+). Its pathway is cofactor biosynthesis; pyridoxine 5'-phosphate biosynthesis; pyridoxine 5'-phosphate from D-erythrose 4-phosphate: step 2/5. In terms of biological role, catalyzes the oxidation of erythronate-4-phosphate to 3-hydroxy-2-oxo-4-phosphonooxybutanoate. In Legionella pneumophila (strain Lens), this protein is Erythronate-4-phosphate dehydrogenase.